The sequence spans 625 residues: Chaperone protein HtpG (625 aa).

Residues 1-341 (MEKKQFQAES…SEDLSLNISR (341 aa)) form an a; substrate-binding region. A b region spans residues 342–551 (EMLQHDRQLK…DGEITLEMEK (210 aa)). Positions 552-625 (VLQAMPDNQN…FSQNMCKVMV (74 aa)) are c.

Belongs to the heat shock protein 90 family. As to quaternary structure, homodimer.

The protein localises to the cytoplasm. Molecular chaperone. Has ATPase activity. This Shouchella clausii (strain KSM-K16) (Alkalihalobacillus clausii) protein is Chaperone protein HtpG.